Here is a 225-residue protein sequence, read N- to C-terminus: 2-C-methyl-D-erythritol 4-phosphate cytidylyltransferase (225 aa).

Belongs to the IspD/TarI cytidylyltransferase family. IspD subfamily.

It catalyses the reaction 2-C-methyl-D-erythritol 4-phosphate + CTP + H(+) = 4-CDP-2-C-methyl-D-erythritol + diphosphate. The protein operates within isoprenoid biosynthesis; isopentenyl diphosphate biosynthesis via DXP pathway; isopentenyl diphosphate from 1-deoxy-D-xylulose 5-phosphate: step 2/6. In terms of biological role, catalyzes the formation of 4-diphosphocytidyl-2-C-methyl-D-erythritol from CTP and 2-C-methyl-D-erythritol 4-phosphate (MEP). This Prochlorococcus marinus (strain NATL2A) protein is 2-C-methyl-D-erythritol 4-phosphate cytidylyltransferase.